The following is a 118-amino-acid chain: MPRAKTGVVRRRKHKKILKLAKGYWGLRSKSFRKARETLFAAGNYAYAHRKRRKRDFRRLWIVRINAACRQHGLNYSTFIHGLKKAGIEVDRKNLADLAVREPQVFAELVERAKAAQG.

This sequence belongs to the bacterial ribosomal protein bL20 family.

Binds directly to 23S ribosomal RNA and is necessary for the in vitro assembly process of the 50S ribosomal subunit. It is not involved in the protein synthesizing functions of that subunit. In Thermus thermophilus (strain ATCC BAA-163 / DSM 7039 / HB27), this protein is Large ribosomal subunit protein bL20.